The sequence spans 68 residues: Large ribosomal subunit protein bL35 (68 aa).

This sequence belongs to the bacterial ribosomal protein bL35 family.

The protein is Large ribosomal subunit protein bL35 of Rickettsia typhi (strain ATCC VR-144 / Wilmington).